The primary structure comprises 111 residues: MIGGNTTIISGAINASTEAPGLGTGGRAWPVLVGVVLGAVVLSILIALAAKCHLCRRYHASYRHRPLSSAGGGNRPPVGEDEDDDGFIEDNYIQPGAGEMETTGSRDHFSL.

Residues 1-27 are Extracellular-facing; the sequence is MIGGNTTIISGAINASTEAPGLGTGGR. N-linked (GlcNAc...) asparagine glycosylation is present at N5. Residues 28 to 48 form a helical; Signal-anchor for type III membrane protein membrane-spanning segment; sequence AWPVLVGVVLGAVVLSILIAL. Residues 49 to 111 are Cytoplasmic-facing; sequence AAKCHLCRRY…TTGSRDHFSL (63 aa). The disordered stretch occupies residues 64–111; it reads HRPLSSAGGGNRPPVGEDEDDDGFIEDNYIQPGAGEMETTGSRDHFSL. Positions 79–88 are enriched in acidic residues; that stretch reads GEDEDDDGFI.

As to expression, expressed in stomach, kidney, large and small intestine and kidney.

It localises to the membrane. The protein resides in the early endosome. The protein localises to the recycling endosome. Its subcellular location is the cell membrane. Its function is as follows. May be involved in membrane trafficking between endosomes and plasma membrane. The sequence is that of Type III endosome membrane protein TEMP from Mus musculus (Mouse).